The following is a 300-amino-acid chain: NAD kinase (300 aa).

The active-site Proton acceptor is aspartate 75. Residues 75 to 76 (DG), 149 to 150 (ND), arginine 177, aspartate 179, 190 to 195 (TAYALS), alanine 214, and glutamine 248 contribute to the NAD(+) site.

The protein belongs to the NAD kinase family. Requires a divalent metal cation as cofactor.

The protein localises to the cytoplasm. It catalyses the reaction NAD(+) + ATP = ADP + NADP(+) + H(+). Functionally, involved in the regulation of the intracellular balance of NAD and NADP, and is a key enzyme in the biosynthesis of NADP. Catalyzes specifically the phosphorylation on 2'-hydroxyl of the adenosine moiety of NAD to yield NADP. The protein is NAD kinase of Paraburkholderia phymatum (strain DSM 17167 / CIP 108236 / LMG 21445 / STM815) (Burkholderia phymatum).